The sequence spans 243 residues: Phosphoribosylaminoimidazole-succinocarboxamide synthase (243 aa).

It belongs to the SAICAR synthetase family.

It carries out the reaction 5-amino-1-(5-phospho-D-ribosyl)imidazole-4-carboxylate + L-aspartate + ATP = (2S)-2-[5-amino-1-(5-phospho-beta-D-ribosyl)imidazole-4-carboxamido]succinate + ADP + phosphate + 2 H(+). Its pathway is purine metabolism; IMP biosynthesis via de novo pathway; 5-amino-1-(5-phospho-D-ribosyl)imidazole-4-carboxamide from 5-amino-1-(5-phospho-D-ribosyl)imidazole-4-carboxylate: step 1/2. This Thermosynechococcus vestitus (strain NIES-2133 / IAM M-273 / BP-1) protein is Phosphoribosylaminoimidazole-succinocarboxamide synthase.